A 140-amino-acid chain; its full sequence is Holo-[acyl-carrier-protein] synthase (140 aa).

Asp8 and Glu62 together coordinate Mg(2+).

It belongs to the P-Pant transferase superfamily. AcpS family. Mg(2+) serves as cofactor.

It is found in the cytoplasm. The catalysed reaction is apo-[ACP] + CoA = holo-[ACP] + adenosine 3',5'-bisphosphate + H(+). Its function is as follows. Transfers the 4'-phosphopantetheine moiety from coenzyme A to a Ser of acyl-carrier-protein. This is Holo-[acyl-carrier-protein] synthase from Cupriavidus necator (strain ATCC 17699 / DSM 428 / KCTC 22496 / NCIMB 10442 / H16 / Stanier 337) (Ralstonia eutropha).